A 273-amino-acid polypeptide reads, in one-letter code: 5-deoxy-glucuronate isomerase (273 aa).

Belongs to the isomerase IolB family.

The catalysed reaction is 5-deoxy-D-glucuronate = 5-dehydro-2-deoxy-D-gluconate. Its pathway is polyol metabolism; myo-inositol degradation into acetyl-CoA; acetyl-CoA from myo-inositol: step 4/7. Involved in the isomerization of 5-deoxy-glucuronate (5DG) to 5-dehydro-2-deoxy-D-gluconate (DKG or 2-deoxy-5-keto-D-gluconate). The protein is 5-deoxy-glucuronate isomerase of Listeria innocua serovar 6a (strain ATCC BAA-680 / CLIP 11262).